We begin with the raw amino-acid sequence, 1353 residues long: Xanthine dehydrogenase 2 (1353 aa).

One can recognise a 2Fe-2S ferredoxin-type domain in the interval 7-93; it reads MEAIMYVNGV…GMHVISIEGV (87 aa). 8 residues coordinate [2Fe-2S] cluster: Cys45, Cys50, Cys53, Cys75, Cys115, Cys118, Cys151, and Cys153. In terms of domain architecture, FAD-binding PCMH-type spans 249–434; it reads GGNEGITWYR…LSVFLPWTRP (186 aa). Residues 277–284, Phe357, 367–371, Asp380, Leu424, and Lys442 contribute to the FAD site; these read LLVGNTEV and CIGGN. The Mo-molybdopterin site is built by Gln788 and Phe819. Positions 823 and 901 each coordinate substrate. Position 933 (Arg933) interacts with Mo-molybdopterin. Residues Phe935 and Thr1031 each contribute to the substrate site. Ala1100 is a Mo-molybdopterin binding site. Glu1289 (proton acceptor) is an active-site residue.

It belongs to the xanthine dehydrogenase family. Homodimer. Requires [2Fe-2S] cluster as cofactor. FAD serves as cofactor. It depends on Mo-molybdopterin as a cofactor. In terms of tissue distribution, expressed in roots, leaves, stems, flowers and siliques.

The enzyme catalyses xanthine + NAD(+) + H2O = urate + NADH + H(+). It carries out the reaction hypoxanthine + NAD(+) + H2O = xanthine + NADH + H(+). Its function is as follows. Key enzyme involved in purine catabolism. Catalyzes the oxidation of hypoxanthine to xanthine and the oxidation of xanthine to urate. Regulates the level of ureides and plays a role during plant growth and development and senescence. The polypeptide is Xanthine dehydrogenase 2 (XDH2) (Arabidopsis thaliana (Mouse-ear cress)).